A 306-amino-acid polypeptide reads, in one-letter code: MQPPGDDAAPRCPFAGAHAPDAPHVPEAAGDDAQAGWHRAQLDFSQSMSYGDYLSLDPILDAQHPRSPDHNEMLFIIQHQTSELWMKLALYELRAALASIRDDALPPAFKMLARVSRVLEQLVQAWNVLATMTPSEYSAMRPYLGASSGFQSYQYRELEFILGNKNAQMLRPHAHRPAIHAHLEASLQAPSLYDEVIRLLARRGFPIAAERLDADWTQPTRHDRTVEAAWLAVYREPNAHWELYEMAEELVDLEDAFRQWRFRHVTTVERIIGFKQGTGGTSGAPYLRKMLDVVLFPELWHVRTTL.

The tract at residues 1–33 (MQPPGDDAAPRCPFAGAHAPDAPHVPEAAGDDA) is disordered. Substrate is bound by residues 75 to 79 (FIIQH), Y137, and R141. H264 lines the heme pocket. A substrate-binding site is contributed by T278.

The protein belongs to the tryptophan 2,3-dioxygenase family. Homotetramer. Heme serves as cofactor.

It catalyses the reaction L-tryptophan + O2 = N-formyl-L-kynurenine. Its pathway is amino-acid degradation; L-tryptophan degradation via kynurenine pathway; L-kynurenine from L-tryptophan: step 1/2. Functionally, heme-dependent dioxygenase that catalyzes the oxidative cleavage of the L-tryptophan (L-Trp) pyrrole ring and converts L-tryptophan to N-formyl-L-kynurenine. Catalyzes the oxidative cleavage of the indole moiety. This chain is Tryptophan 2,3-dioxygenase, found in Burkholderia pseudomallei (strain 668).